Reading from the N-terminus, the 373-residue chain is Chloroperoxidase (373 aa).

The N-terminal stretch at 1–20 (MFSKVLPFVGAVAALPHSVR) is a signal peptide. Glutamine 21 is modified (pyrrolidone carboxylic acid). A glycan (N-linked (GlcNAc...) asparagine) is linked at asparagine 33. Cysteine 50 lines the heme pocket. Cysteine 100 and cysteine 108 are joined by a disulfide. A glycan (N-linked (GlcNAc...) asparagine) is linked at asparagine 114. The Mn(2+) site is built by glutamate 125, histidine 126, and serine 129. The active site involves glutamate 204. The N-linked (GlcNAc...) asparagine glycan is linked to asparagine 237. O-linked (Man) threonine glycosylation occurs at threonine 259. Serine 260, serine 262, serine 263, and serine 269 each carry an O-linked (Man) serine glycan. Threonine 271 carries O-linked (Man) threonine glycosylation. Serine 272 carries O-linked (Man) serine glycosylation. A glycan (O-linked (Man) threonine) is linked at threonine 273. Threonine 296, threonine 304, and threonine 314 each carry an O-linked (Man...) threonine glycan. Residues 322 to 373 (EAAPAATTSMAVFKNPYLEAIGTQDIKNQQAYVSSKAAAMASAMAANKARNL) constitute a propeptide that is removed on maturation.

Belongs to the chloroperoxidase family. Heme b serves as cofactor. It depends on Mn(2+) as a cofactor. N- and O-glycosylated.

The catalysed reaction is RH + Cl(-) + H2O2 = RCl + 2 H2O.. Catalyzes peroxidative halogenations involved in the biosynthesis of clardariomycin (2,2-dichloro-1,3-cyclo-pentenedione). The enzyme also has potent catalase activity and in the absence of halide ion, acts as a peroxidase similar to plant peroxidases. This chain is Chloroperoxidase (CPO), found in Leptoxyphium fumago (Caldariomyces fumago).